The chain runs to 368 residues: Agmatine deiminase (368 aa).

Cys-357 serves as the catalytic Amidino-cysteine intermediate.

The protein belongs to the agmatine deiminase family. In terms of assembly, homodimer.

It carries out the reaction agmatine + H2O = N-carbamoylputrescine + NH4(+). Its pathway is amine and polyamine biosynthesis; putrescine biosynthesis via agmatine pathway; N-carbamoylputrescine from agmatine: step 1/1. Its function is as follows. Mediates the hydrolysis of agmatine into N-carbamoylputrescine in the arginine decarboxylase (ADC) pathway of putrescine biosynthesis, a basic polyamine. This is Agmatine deiminase from Pseudomonas savastanoi pv. phaseolicola (strain 1448A / Race 6) (Pseudomonas syringae pv. phaseolicola (strain 1448A / Race 6)).